Consider the following 2352-residue polypeptide: MSVDNKQVPGPVAIVGLACRFPGDATSPSKFWDLLKSGKDAYSETTDRYNAQAFYHPNSKRQNVLPVTGGHFLKQDPHVFDAAFFNITAAEAISLDPKQRIALEVAYEAFENAGKPLKQVAGTTTACFVGSSMSDYRDAVVRDFAHNPKYHVLGTCEEMIANRISHFFDIHGPSATVHTACSSSLVAIHLACQSLLSGDAEMALAGGVGMILTPDGTMQLNNLGFLNPEGHSRSFDKDAGGYGRGEGCGILVLKKLDKAIQDGDNIRAVIRASGVNSDGWTQGVTMPSSEAQAALIKHVYETRGLDYGATQYVEAHGTGTKAGDPVETGAIHRTIGQGASKNRKLWVGSVKPNIGHLEAAAGVASVIKGVLAMENSLIPPNIHFASPNPEIPLDEWNMAVPTKLTPWPAARTKRMSVSGFGMGGTNGHVVLEAFNSTPQSILYGDAQYQPAHNGKRLFTFSSHDQAGLDRVSKSLVDHLDSLGPAGARPEYLADLGYSLSVGKSGLSWKTAHLAESLTELREKLSSPQSEHAVREPRSQPKIGFVFTGQGAQWARMGVEMLHRPVFKESVQRSTDYLQQLGCDWTPIVELSRAQKESRLTLPEISQPICSVLQIALVDELRSWGVAPVSVVGHSSGEIAAAYCIEALSHKDAIAVAYFRGKVSAGLNHLNGGMMAVGCSRAEAETLIDESDLQGGHVTVACVNSPSNVTLSGDVAPLDQLKGILEKRGIFARRLRVEVAYHSTHMNSVFADYTASIADIEPQSCPSHQPIMVSSVTNNQVDPALLGSYYWGRNLISPVLFSDTIKEMVSPADGNGQKAVDLLVEIGPHGALGGPIEQILSHFDIENVGYQSMLTRGQNAVETSLELATSLFLQGVAIDIQKVNGDSGCRLLTNLPPYPWNHSKKFRAESRLQRELIAQSTPTRSIIGAPVPKMNESQRVWRGFIRLDDEPWIRGHTVGTTVLFPGAGMVSIVLEAAQQMVDPGKVARAFRLRDVSFSAAMALPEDQATEVIIQMKPQLVATSGSTPATWWEFTVSSCAGTDQLRDNCRGLITIDYEGNTSQQMAHEDSQVVSGRISDYHQILEECPATYAKDRFYKHMMKAAWRYGETFQGVENCHPGDGKTVFDVKLIDIGETFSKGQLDRPFLIHGATLDAVFQGWLGSTYKNGTFEFDKPFVPTKIGEMEISFNVPSEAGYMMPGLCRSHRSGFNELSADTIMFDKDLSRVILSVIDFRTSELEMDGAATEETTVEVDPADITSKVLWDYSLSLMEPCDLKQVMGSIVAQNSLTDFVRMLLHDNPAANIVEFISRSDGLPNTYASKLPPGTILPTQIRYAVVDETEDVGDENAASSMLTIDALVDSVSASGATADIVVIPQGFQFQDNYAKILEPLAKVSKPNTTIVVAVDTPDTTVPLKAKGFQLLHSIQGTPSLEVFAGLTGEQEKPTNGIHKEEVVLLLPSMLSTVTKEFAEEVQLDLEGQGFSVSTESLAESIDDSTFDGKTCVSLLEVERPLLDSLSESDFQLIRKVVLTSQRILWVTHGESPSLALVDGFSRCIMSEIEGVKFQVLHLSEPTGLQHGPRLAAKVIASKASDNEFRDKDGLLQVARIFKGLTENENIRHHLHDDVRVTRLSNQEHPLRLTIGKPGLLDTLYFVDDERVLAPLADHEVEIQVKATGLNFRDVMASMALVPVKGLGQEASGIVLRTGRDATHLKPGDRVSTLDMGTHATVMRADHRVTVKIPDAMSFEEAAAVPVVHTTAYYALVRLAKLQRGQSVLIHAAAGGVGQAALQLANHLGLVVYATVGSDDKRKLLTDTYQVSEDHIFNSRDASFAKGIMRVTGGRGVDCVLNSLSGELLRVSWSCLATFGTFVEIGLRDITNNMLLDMRPFSKSTTFSFINMYTLFEEDPSALGDILEEVFKLLGGGILQTPSPMTVYPINQVEDAFRIMQQGKHRGKIVLSFPDDAQAPVLHVAKNSMKLDSQATYLFVGGLGGLGRSLAKEFVSCGAKNIAFISRSGDSTSEAKATIKEITSRGANVKAYAADISNETAFLNAMKECSREFPPIKGVVQMAMVLRDVVFEKMTYEEWKLPLKPKVQGSWNLHKYFDHERPLDFMVICSSSSGIYGYPSQAQYAAGNTYQDALAHYRRAQGLRAVSVNLGIMRDVGVLAEQGTSGNIKLWEEVLGIREPAFHALMKSLIKGQTDNNSEFPAQICTGLGTADIMATHGLAKPTYFQDPRFGPLAVTSLSSDASGDKQSTAMSISSQLSEASSKAKATEIITNALIGKVADILQMPQSEVDPGQPLYRYGVDSLVALEVRNWITREMKVNVALLEILAAVPMESFAGKLASTSKLVTVS.

In terms of domain architecture, Ketosynthase family 3 (KS3) spans 9-433; it reads PGPVAIVGLA…GTNGHVVLEA (425 aa). Residues Cys181, His316, and His356 each act as for beta-ketoacyl synthase activity in the active site. Residues 544 to 875 are malonyl-CoA:ACP transacylase (MAT) domain; sequence FVFTGQGAQW…LATSLFLQGV (332 aa). The For malonyltransferase activity role is filled by Ser634. The N-terminal hotdog fold stretch occupies residues 923–1058; it reads RSIIGAPVPK…GLITIDYEGN (136 aa). A PKS/mFAS DH domain is found at 923–1242; the sequence is RSIIGAPVPK…TSELEMDGAA (320 aa). Residues 925–1237 form a dehydratase (DH) domain region; it reads IIGAPVPKMN…VIDFRTSELE (313 aa). The active-site Proton acceptor; for dehydratase activity is His955. The tract at residues 1086–1242 is C-terminal hotdog fold; that stretch reads PATYAKDRFY…TSELEMDGAA (157 aa). Asp1152 serves as the catalytic Proton donor; for dehydratase activity. Residues 1643–1955 are enoylreductase (ER) domain; that stretch reads GLLDTLYFVD…QGKHRGKIVL (313 aa). The interval 1979 to 2159 is catalytic ketoreductase (KRc) domain; it reads ATYLFVGGLG…VSVNLGIMRD (181 aa). A Carrier domain is found at 2269-2346; the sequence is KATEIITNAL…SFAGKLASTS (78 aa). Ser2306 is modified (O-(pantetheine 4'-phosphoryl)serine).

Its pathway is mycotoxin biosynthesis. In terms of biological role, highly reducing polyketide synthase; part of the gene cluster that mediates the biosynthesis of zearalenone (ZEA), a nonsteroid estrogen that is a contaminant of cereal grains and causes estrogenic disorders in humans and animals. The ZEA backbone is synthesized from a single acetyl-CoA molecule and eight malonyl-CoA molecules. The reducing polyketide synthase ZEA2 is proposed to synthesize a reduced hexaketide intermediate by using different combinations of its reductive domains during each round of condensation. The hexaketide thioester is then transacylated to the non-reducing polyketide synthase ZEA1 and is further condensed with three malonyl-CoAs without reductive tailoring to yield a mixed reduced/unreduced nonaketide. ZEA1 must be able to interact with ZEA2 to facilitate starter-unit acyltransfer and initiate polyketide biosynthesis. ZEA1 also mediates the required C2-C7 cyclization to form the resorcylate core and catalyzes the formation of the macrolactone. ZEB1 is then responsible for the chemical conversion of beta-zearalenonol (beta-ZOL) to ZEA in the biosynthetic pathway. The protein is Highly reducing polyketide synthase ZEA2 of Gibberella zeae (strain ATCC MYA-4620 / CBS 123657 / FGSC 9075 / NRRL 31084 / PH-1) (Wheat head blight fungus).